The sequence spans 222 residues: Thiopurine S-methyltransferase (222 aa).

The S-adenosyl-L-methionine site is built by tryptophan 10, leucine 45, glutamate 66, and arginine 124.

The protein belongs to the class I-like SAM-binding methyltransferase superfamily. TPMT family.

The protein resides in the cytoplasm. The enzyme catalyses S-adenosyl-L-methionine + a thiopurine = S-adenosyl-L-homocysteine + a thiopurine S-methylether.. This Methylococcus capsulatus (strain ATCC 33009 / NCIMB 11132 / Bath) protein is Thiopurine S-methyltransferase.